A 328-amino-acid polypeptide reads, in one-letter code: MSEKIRVLLYYKYVPIEDAQAYAAKHLEFCKSIGLKGRIIIADEGINGTVSGDYETTQKYMDWVHSDERFSDLWFKMDEEEEQAFKKMFVRYKKEIVHLGLEDNQFDEDINPLEVTGQYLNPKEFKEALLDEDTIVLDTRNDYEYDLGHFRGAVRPDIRNFRELPQWVRDNKDKFMEKRVVVYCTGGVRCEKFSGWMVREGFKDVGQLHGGIATYGKDPEVQGELWDGAMYVFDERISVPINHVDPTVISKDHFDGRPCERYVNCANPFCNKQIFASEENEAKYVRGCSPECRAHERNRYVSENGLSRQEWAARLEAIGETLPQVETV.

Residues 130-224 (LDEDTIVLDT…YGKDPEVQGE (95 aa)) form the Rhodanese domain. Residue Cys-184 is the Cysteine persulfide intermediate of the active site.

Belongs to the TrhO family.

The catalysed reaction is uridine(34) in tRNA + AH2 + O2 = 5-hydroxyuridine(34) in tRNA + A + H2O. Functionally, catalyzes oxygen-dependent 5-hydroxyuridine (ho5U) modification at position 34 in tRNAs. The polypeptide is tRNA uridine(34) hydroxylase (Streptococcus uberis (strain ATCC BAA-854 / 0140J)).